The chain runs to 148 residues: uncharacterized protein (148 aa).

It is found in the plastid. It localises to the chloroplast. This is an uncharacterized protein from Porphyra purpurea (Red seaweed).